The primary structure comprises 257 residues: MVLIRVLANLLILQLSYAQKSSELVVGGDECNINEHRSLVLVYSDGIQCGGTLINQEWMLTAAHCDGKKMKLQFGLHSKKVPNKDKQTRVPKEKFFCLSSKNNKEWDKDIMLIRLNRPVNNSKHIAPLSLPSKPPSQDTVCNIMGWGTISPTEETYPDVPHCANINILDHAVCRAIYPGLLEKSRVLCAGILEGGKDTCGGDSGGPLICNGEIQGLLSVGGDPCAQPHVPALYIKVFDYTEWIQSIITGNTAATCPP.

Positions 1 to 18 are cleaved as a signal peptide; sequence MVLIRVLANLLILQLSYA. The propeptide occupies 19–24; sequence QKSSEL. One can recognise a Peptidase S1 domain in the interval 25-248; it reads VVGGDECNIN…YTEWIQSIIT (224 aa). Intrachain disulfides connect cysteine 31-cysteine 162, cysteine 49-cysteine 65, cysteine 97-cysteine 255, cysteine 141-cysteine 209, cysteine 173-cysteine 188, and cysteine 199-cysteine 224. Active-site charge relay system residues include histidine 64 and aspartate 109. Asparagine 120 carries N-linked (GlcNAc...) asparagine glycosylation. Serine 203 functions as the Charge relay system in the catalytic mechanism.

Belongs to the peptidase S1 family. Snake venom subfamily. In terms of assembly, monomer. As to expression, expressed by the venom gland.

The protein resides in the secreted. In terms of biological role, snake venom serine protease that may act in the hemostasis system of the prey. This Crotalus adamanteus (Eastern diamondback rattlesnake) protein is Snake venom serine proteinase 11.